Here is a 328-residue protein sequence, read N- to C-terminus: 4-hydroxy-3-methylbut-2-enyl diphosphate reductase (328 aa).

Cys24 provides a ligand contact to [4Fe-4S] cluster. The (2E)-4-hydroxy-3-methylbut-2-enyl diphosphate site is built by His55 and His88. 2 residues coordinate dimethylallyl diphosphate: His55 and His88. Isopentenyl diphosphate contacts are provided by His55 and His88. Position 110 (Cys110) interacts with [4Fe-4S] cluster. His138 lines the (2E)-4-hydroxy-3-methylbut-2-enyl diphosphate pocket. Residue His138 coordinates dimethylallyl diphosphate. His138 serves as a coordination point for isopentenyl diphosphate. The active-site Proton donor is the Glu140. Thr178 lines the (2E)-4-hydroxy-3-methylbut-2-enyl diphosphate pocket. Residue Cys208 coordinates [4Fe-4S] cluster. Positions 236, 237, 238, and 279 each coordinate (2E)-4-hydroxy-3-methylbut-2-enyl diphosphate. Dimethylallyl diphosphate contacts are provided by Ser236, Ser237, Asn238, and Ser279. Isopentenyl diphosphate contacts are provided by Ser236, Ser237, Asn238, and Ser279.

The protein belongs to the IspH family. It depends on [4Fe-4S] cluster as a cofactor.

The catalysed reaction is isopentenyl diphosphate + 2 oxidized [2Fe-2S]-[ferredoxin] + H2O = (2E)-4-hydroxy-3-methylbut-2-enyl diphosphate + 2 reduced [2Fe-2S]-[ferredoxin] + 2 H(+). The enzyme catalyses dimethylallyl diphosphate + 2 oxidized [2Fe-2S]-[ferredoxin] + H2O = (2E)-4-hydroxy-3-methylbut-2-enyl diphosphate + 2 reduced [2Fe-2S]-[ferredoxin] + 2 H(+). The protein operates within isoprenoid biosynthesis; dimethylallyl diphosphate biosynthesis; dimethylallyl diphosphate from (2E)-4-hydroxy-3-methylbutenyl diphosphate: step 1/1. Its pathway is isoprenoid biosynthesis; isopentenyl diphosphate biosynthesis via DXP pathway; isopentenyl diphosphate from 1-deoxy-D-xylulose 5-phosphate: step 6/6. Functionally, catalyzes the conversion of 1-hydroxy-2-methyl-2-(E)-butenyl 4-diphosphate (HMBPP) into a mixture of isopentenyl diphosphate (IPP) and dimethylallyl diphosphate (DMAPP). Acts in the terminal step of the DOXP/MEP pathway for isoprenoid precursor biosynthesis. The sequence is that of 4-hydroxy-3-methylbut-2-enyl diphosphate reductase from Ehrlichia ruminantium (strain Welgevonden).